We begin with the raw amino-acid sequence, 339 residues long: Scoulerine-9-O-methyltransferase 3 (339 aa).

Residue Met-161 participates in S-adenosyl-L-methionine binding. A substrate-binding site is contributed by Asp-164. Residues Thr-165, Gly-191, Asp-214, 228–229 (DV), and Lys-242 each bind S-adenosyl-L-methionine. Residue 243-247 (SILHE) participates in substrate binding. The Proton acceptor role is filled by His-246.

It belongs to the class I-like SAM-binding methyltransferase superfamily. Cation-independent O-methyltransferase family. COMT subfamily. As to quaternary structure, homodimer. Forms heterodimer with SOMT2. The heterodimer SOMT2-SOMT3 possesses 3-O-acetyl-4'-O-demethylpapaveroxine 4'-O-methyltransferase activity, where SOMT2 is the catalytic subunit. Highly expressed in capsules. Expressed is stems. Expressed at low levels in roots.

It carries out the reaction (S)-scoulerine + S-adenosyl-L-methionine = (S)-tetrahydrocolumbamine + S-adenosyl-L-homocysteine + H(+). Its pathway is alkaloid biosynthesis. In terms of biological role, methyltransferase involved in the biosynthesis of the benzylisoquinoline alkaloid noscapine. Catalyzes the conversion of (S)-scoulerine to (S)-tetrahydrocolumbamine. The protein is Scoulerine-9-O-methyltransferase 3 of Papaver somniferum (Opium poppy).